The primary structure comprises 145 residues: Small ribosomal subunit protein eS19 (145 aa).

It belongs to the eukaryotic ribosomal protein eS19 family. Part of the 30S ribosomal subunit.

May be involved in maturation of the 30S ribosomal subunit. The polypeptide is Small ribosomal subunit protein eS19 (Methanothermobacter thermautotrophicus (strain ATCC 29096 / DSM 1053 / JCM 10044 / NBRC 100330 / Delta H) (Methanobacterium thermoautotrophicum)).